The following is an 875-amino-acid chain: Phosphoenolpyruvate carboxylase (875 aa).

Residues His137 and Lys542 contribute to the active site.

It belongs to the PEPCase type 1 family. Mg(2+) is required as a cofactor.

The enzyme catalyses oxaloacetate + phosphate = phosphoenolpyruvate + hydrogencarbonate. In terms of biological role, forms oxaloacetate, a four-carbon dicarboxylic acid source for the tricarboxylic acid cycle. This chain is Phosphoenolpyruvate carboxylase, found in Pseudomonas putida (strain ATCC 47054 / DSM 6125 / CFBP 8728 / NCIMB 11950 / KT2440).